The following is a 127-amino-acid chain: Small ribosomal subunit protein uS13 (127 aa).

The disordered stretch occupies residues 100-127 (GQRTRTNARTRKGVRKTVAGKKKAPAKK). Residues 101 to 127 (QRTRTNARTRKGVRKTVAGKKKAPAKK) show a composition bias toward basic residues.

This sequence belongs to the universal ribosomal protein uS13 family. As to quaternary structure, part of the 30S ribosomal subunit. Forms a loose heterodimer with protein S19. Forms two bridges to the 50S subunit in the 70S ribosome.

In terms of biological role, located at the top of the head of the 30S subunit, it contacts several helices of the 16S rRNA. In the 70S ribosome it contacts the 23S rRNA (bridge B1a) and protein L5 of the 50S subunit (bridge B1b), connecting the 2 subunits; these bridges are implicated in subunit movement. Contacts the tRNAs in the A and P-sites. The polypeptide is Small ribosomal subunit protein uS13 (Synechococcus sp. (strain JA-3-3Ab) (Cyanobacteria bacterium Yellowstone A-Prime)).